The primary structure comprises 192 residues: Visinin (192 aa).

The N-myristoyl glycine moiety is linked to residue Gly-2. EF-hand domains are found at residues 24–59, 61–96, 97–132, and 146–181; these read TEEELSRWYEGFQRQCPDGRIRCDEFERIYGNFFPN, EPQGYARHVFRSFDTNDDGTLDFREYIIALHLTSSG, KTHLKLEWAFSLFDVDRNGEVSKSEVLEIITAIFKM, and NSPQKRADKLWAYFNKGENDKIAEGEFIDGVMKNDA. Ca(2+)-binding residues include Asp-74, Asn-76, Asp-78, Thr-80, Glu-85, Asp-110, Asp-112, Asn-114, Glu-116, Glu-121, Asn-164, Lys-166, and Glu-171.

It belongs to the recoverin family. Retinal cell specific protein.

In terms of biological role, seems to be implicated in the pathway from retinal rod guanylate cyclase to rhodopsin. May be involved in the blocking of the phosphorylation of rhodopsin. This Gallus gallus (Chicken) protein is Visinin.